Reading from the N-terminus, the 171-residue chain is ATP synthase subunit b (171 aa).

A helical transmembrane segment spans residues 14–34 (LGDMLFIGISFIVLMALISVV). Residues 56–97 (SAQKSRQEASDLADQRRDALSHSRAEASEIVADAKKSGEKQR) show a composition bias toward basic and acidic residues. The segment at 56 to 104 (SAQKSRQEASDLADQRRDALSHSRAEASEIVADAKKSGEKQRSSIVADA) is disordered.

Belongs to the ATPase B chain family. F-type ATPases have 2 components, F(1) - the catalytic core - and F(0) - the membrane proton channel. F(1) has five subunits: alpha(3), beta(3), gamma(1), delta(1), epsilon(1). F(0) has three main subunits: a(1), b(2) and c(10-14). The alpha and beta chains form an alternating ring which encloses part of the gamma chain. F(1) is attached to F(0) by a central stalk formed by the gamma and epsilon chains, while a peripheral stalk is formed by the delta and b chains.

Its subcellular location is the cell membrane. F(1)F(0) ATP synthase produces ATP from ADP in the presence of a proton or sodium gradient. F-type ATPases consist of two structural domains, F(1) containing the extramembraneous catalytic core and F(0) containing the membrane proton channel, linked together by a central stalk and a peripheral stalk. During catalysis, ATP synthesis in the catalytic domain of F(1) is coupled via a rotary mechanism of the central stalk subunits to proton translocation. In terms of biological role, component of the F(0) channel, it forms part of the peripheral stalk, linking F(1) to F(0). This chain is ATP synthase subunit b, found in Lactiplantibacillus plantarum (strain ATCC BAA-793 / NCIMB 8826 / WCFS1) (Lactobacillus plantarum).